The following is a 301-amino-acid chain: Lipoyl synthase (301 aa).

7 residues coordinate [4Fe-4S] cluster: Cys53, Cys58, Cys64, Cys79, Cys83, Cys86, and Ser290. The Radical SAM core domain maps to 65–279 (WSRKTATYML…RIYGKSIGFK (215 aa)).

The protein belongs to the radical SAM superfamily. Lipoyl synthase family. [4Fe-4S] cluster serves as cofactor.

It localises to the cytoplasm. It carries out the reaction [[Fe-S] cluster scaffold protein carrying a second [4Fe-4S](2+) cluster] + N(6)-octanoyl-L-lysyl-[protein] + 2 oxidized [2Fe-2S]-[ferredoxin] + 2 S-adenosyl-L-methionine + 4 H(+) = [[Fe-S] cluster scaffold protein] + N(6)-[(R)-dihydrolipoyl]-L-lysyl-[protein] + 4 Fe(3+) + 2 hydrogen sulfide + 2 5'-deoxyadenosine + 2 L-methionine + 2 reduced [2Fe-2S]-[ferredoxin]. Its pathway is protein modification; protein lipoylation via endogenous pathway; protein N(6)-(lipoyl)lysine from octanoyl-[acyl-carrier-protein]: step 2/2. Its function is as follows. Catalyzes the radical-mediated insertion of two sulfur atoms into the C-6 and C-8 positions of the octanoyl moiety bound to the lipoyl domains of lipoate-dependent enzymes, thereby converting the octanoylated domains into lipoylated derivatives. This Leptospira interrogans serogroup Icterohaemorrhagiae serovar copenhageni (strain Fiocruz L1-130) protein is Lipoyl synthase.